We begin with the raw amino-acid sequence, 383 residues long: MKNKLPPFIEIYRALIATPSISATEEALDQSNADLITLLADWFKDLGFNVEVQPVPGTRNKFNMLASYGQGAGGLLLAGHTDTVPFDDGRWTRDPFTLTEHDGKLYGLGTADMKGFFAFILDALRDVDVTKLKKPLYILATADEETSMAGARYFAETTALRPDCAIIGEPTSLQPVRAHKGHISNAIRIQGQSGHSSDPARGINAIELMHDAIGHILQLRDNLKERYHYEAFTVPYPTLNLGHIHGGDASNRICACCELHMDIRPQPGMTLNELNGLLNDALAPVSERWPGRLTVDELHPPIPGYECPPNHQLVEVVEKLLGAKTEVVNYCTEAPFIQTLCPTLVLGPGSINQAHQPDEYLETRFIKPTRELIIQVIHHFCWH.

H80 lines the Zn(2+) pocket. D82 is a catalytic residue. Zn(2+) is bound at residue D112. E144 is an active-site residue. Zn(2+) is bound by residues E145, E169, and H355.

Belongs to the peptidase M20A family. ArgE subfamily. As to quaternary structure, homodimer. Zn(2+) is required as a cofactor. It depends on Co(2+) as a cofactor. Glutathione serves as cofactor.

The protein resides in the cytoplasm. It catalyses the reaction N(2)-acetyl-L-ornithine + H2O = L-ornithine + acetate. The protein operates within amino-acid biosynthesis; L-arginine biosynthesis; L-ornithine from N(2)-acetyl-L-ornithine (linear): step 1/1. Catalyzes the hydrolysis of the amide bond of N(2)-acetylated L-amino acids. Cleaves the acetyl group from N-acetyl-L-ornithine to form L-ornithine, an intermediate in L-arginine biosynthesis pathway, and a branchpoint in the synthesis of polyamines. The polypeptide is Acetylornithine deacetylase (Shigella flexneri).